Reading from the N-terminus, the 969-residue chain is Manganese resistance protein MNR2 (969 aa).

Over residues 1–11 the composition is skewed to basic and acidic residues; it reads MSTDNSQKDEG. 4 disordered regions span residues 1–49, 96–153, 167–186, and 199–256; these read MSTD…SRRP, GAFI…DLSP, HKSF…NANN, and VNNN…NNSS. The Cytoplasmic segment spans residues 1–912; it reads MSTDNSQKDE…DMNDVLGKIT (912 aa). Residues 13 to 23 show a composition bias toward low complexity; it reads PLLSPYSSSPQ. A compositionally biased stretch (basic residues) spans 24–36; that stretch reads LRKKKRNQKRRKD. Basic and acidic residues predominate over residues 37 to 48; it reads KFVGHLKSDSRR. The residue at position 114 (Ser-114) is a Phosphoserine. Over residues 141–152 the composition is skewed to polar residues; sequence SDQNRSLVSDLS. Ser-175 is subject to Phosphoserine. A Phosphothreonine modification is found at Thr-177. Ser-182 carries the post-translational modification Phosphoserine. Composition is skewed to low complexity over residues 225 to 234 and 244 to 256; these read NKNSKSTSSD and SRPS…NNSS. Residue Ser-383 is modified to Phosphoserine. 2 disordered regions span residues 559 to 662 and 746 to 769; these read VRRR…KPRE and QSDD…DEDA. Positions 565-578 are enriched in basic and acidic residues; that stretch reads EKQESATLDHESIS. Residue Thr-571 is modified to Phosphothreonine. Ser-576 and Ser-582 each carry phosphoserine. 2 stretches are compositionally biased toward low complexity: residues 590–607 and 622–632; these read SNES…ASRS and ANRTTNTSSSS. A compositionally biased stretch (acidic residues) spans 749–769; that stretch reads DSSDSDSSDSDSDSGASDEDA. Residues 913–933 form a helical membrane-spanning segment; that stretch reads ILGTIVLPMNVITGLWGMNVI. Residues 934–941 are Extracellular-facing; it reads VPGQYRDS. A helical transmembrane segment spans residues 942-962; sequence LTWFIGIVLFMCMLACSAYMY. At 963 to 969 the chain is on the cytoplasmic side; the sequence is TKRRFGF.

The protein belongs to the CorA metal ion transporter (MIT) (TC 1.A.35) family.

The protein localises to the membrane. This Saccharomyces cerevisiae (strain ATCC 204508 / S288c) (Baker's yeast) protein is Manganese resistance protein MNR2 (MNR2).